The following is a 501-amino-acid chain: Putative ribose/galactose/methyl galactoside import ATP-binding protein 1 (501 aa).

ABC transporter domains follow at residues 5–237 and 249–492; these read VSLS…VGRQ and VPGE…MTRS. Position 37-44 (37-44) interacts with ATP; sequence GENGAGKS.

The protein belongs to the ABC transporter superfamily. Carbohydrate importer 2 (CUT2) (TC 3.A.1.2) family.

The protein resides in the cell inner membrane. The catalysed reaction is D-ribose(out) + ATP + H2O = D-ribose(in) + ADP + phosphate + H(+). It carries out the reaction D-galactose(out) + ATP + H2O = D-galactose(in) + ADP + phosphate + H(+). Functionally, part of an ABC transporter complex involved in carbohydrate import. Could be involved in ribose, galactose and/or methyl galactoside import. Responsible for energy coupling to the transport system. The chain is Putative ribose/galactose/methyl galactoside import ATP-binding protein 1 from Rhizobium meliloti (strain 1021) (Ensifer meliloti).